A 496-amino-acid polypeptide reads, in one-letter code: Probable fatty acyl-CoA reductase 5 (496 aa).

Belongs to the fatty acyl-CoA reductase family. As to expression, expressed in the endodermal cell layer surrounding the central vasculature in roots. Expressed in floral organs of very young unopened buds and receptacle of siliques.

The enzyme catalyses a long-chain fatty acyl-CoA + 2 NADPH + 2 H(+) = a long-chain primary fatty alcohol + 2 NADP(+) + CoA. Its function is as follows. Catalyzes the reduction of fatty acyl-CoA to fatty alcohols. Catalyzes specifically the formation of C18:0 fatty alcohol. Provides the fatty alcohols required for synthesis of suberin in roots, seed coat and wound-induced leaf tissue. Provides the fatty alcohols required for synthesis of alkyl hydroxycinnamates in root waxes. This is Probable fatty acyl-CoA reductase 5 from Arabidopsis thaliana (Mouse-ear cress).